The primary structure comprises 198 residues: Probable GTP-binding protein EngB (198 aa).

The 175-residue stretch at 21–195 folds into the EngB-type G domain; the sequence is NFSEVAFLGR…EDIIINQTLG (175 aa). Residues 29–36, 56–60, 81–84, 151–154, and 174–176 each bind GTP; these read GRSNVGKS, GKTQL, DLPG, TKCD, and VSN. Residues serine 36 and threonine 58 each contribute to the Mg(2+) site.

Belongs to the TRAFAC class TrmE-Era-EngA-EngB-Septin-like GTPase superfamily. EngB GTPase family. Mg(2+) is required as a cofactor.

Its function is as follows. Necessary for normal cell division and for the maintenance of normal septation. The chain is Probable GTP-binding protein EngB from Campylobacter jejuni subsp. jejuni serotype O:2 (strain ATCC 700819 / NCTC 11168).